Consider the following 222-residue polypeptide: Ribosomal RNA small subunit methyltransferase I (222 aa).

It belongs to the methyltransferase superfamily. RsmI family.

It is found in the cytoplasm. It catalyses the reaction cytidine(1402) in 16S rRNA + S-adenosyl-L-methionine = 2'-O-methylcytidine(1402) in 16S rRNA + S-adenosyl-L-homocysteine + H(+). In terms of biological role, catalyzes the 2'-O-methylation of the ribose of cytidine 1402 (C1402) in 16S rRNA. This chain is Ribosomal RNA small subunit methyltransferase I, found in Mycoplasmopsis pulmonis (strain UAB CTIP) (Mycoplasma pulmonis).